Consider the following 504-residue polypeptide: Anaerobic nitric oxide reductase transcription regulator NorR (504 aa).

Asp-57 is modified (4-aspartylphosphate). Residues Met-187–Val-416 enclose the Sigma-54 factor interaction domain. ATP is bound by residues Gly-215–Glu-222 and Ala-278–Glu-287. The segment at residues Trp-479–Lys-498 is a DNA-binding region (H-T-H motif).

Its pathway is nitrogen metabolism; nitric oxide reduction. Functionally, required for the expression of anaerobic nitric oxide (NO) reductase, acts as a transcriptional activator for at least the norVW operon. Activation also requires sigma-54. This Escherichia coli O6:K15:H31 (strain 536 / UPEC) protein is Anaerobic nitric oxide reductase transcription regulator NorR.